A 179-amino-acid chain; its full sequence is Translation initiation factor IF-3 (179 aa).

This sequence belongs to the IF-3 family. Monomer.

The protein resides in the cytoplasm. Its function is as follows. IF-3 binds to the 30S ribosomal subunit and shifts the equilibrium between 70S ribosomes and their 50S and 30S subunits in favor of the free subunits, thus enhancing the availability of 30S subunits on which protein synthesis initiation begins. This chain is Translation initiation factor IF-3, found in Treponema pallidum (strain Nichols).